Reading from the N-terminus, the 285-residue chain is 4-diphosphocytidyl-2-C-methyl-D-erythritol kinase (285 aa).

Lys-10 is an active-site residue. 94–104 (PVAAGLGGGSS) contacts ATP. Asp-136 is a catalytic residue.

Belongs to the GHMP kinase family. IspE subfamily.

The catalysed reaction is 4-CDP-2-C-methyl-D-erythritol + ATP = 4-CDP-2-C-methyl-D-erythritol 2-phosphate + ADP + H(+). The protein operates within isoprenoid biosynthesis; isopentenyl diphosphate biosynthesis via DXP pathway; isopentenyl diphosphate from 1-deoxy-D-xylulose 5-phosphate: step 3/6. In terms of biological role, catalyzes the phosphorylation of the position 2 hydroxy group of 4-diphosphocytidyl-2C-methyl-D-erythritol. In Latilactobacillus sakei subsp. sakei (strain 23K) (Lactobacillus sakei subsp. sakei), this protein is 4-diphosphocytidyl-2-C-methyl-D-erythritol kinase.